The sequence spans 170 residues: Small ribosomal subunit protein uS5 (170 aa).

The S5 DRBM domain maps to 16 to 79; it reads IEDQLVAINR…EAGKKNMISV (64 aa).

Belongs to the universal ribosomal protein uS5 family. In terms of assembly, part of the 30S ribosomal subunit. Contacts proteins S4 and S8.

Its function is as follows. With S4 and S12 plays an important role in translational accuracy. Located at the back of the 30S subunit body where it stabilizes the conformation of the head with respect to the body. This Lactobacillus delbrueckii subsp. bulgaricus (strain ATCC 11842 / DSM 20081 / BCRC 10696 / JCM 1002 / NBRC 13953 / NCIMB 11778 / NCTC 12712 / WDCM 00102 / Lb 14) protein is Small ribosomal subunit protein uS5.